The primary structure comprises 251 residues: Flap endonuclease Xni (251 aa).

D104 contacts Mg(2+). The 5'-3' exonuclease domain maps to 160-249 (VLPRQLPDYW…IDGNLQQLRL (90 aa)). L171, A172, P180, V182, and I185 together coordinate K(+). The segment at 184 to 189 (GIGPKS) is interaction with DNA.

It belongs to the Xni family. Mg(2+) serves as cofactor. Requires K(+) as cofactor.

Functionally, has flap endonuclease activity. During DNA replication, flap endonucleases cleave the 5'-overhanging flap structure that is generated by displacement synthesis when DNA polymerase encounters the 5'-end of a downstream Okazaki fragment. The sequence is that of Flap endonuclease Xni from Salmonella paratyphi A (strain ATCC 9150 / SARB42).